Reading from the N-terminus, the 233-residue chain is Ribonuclease 3 (233 aa).

The RNase III domain maps to Leu-5–Gly-127. Glu-40 is a Mg(2+) binding site. Asp-44 is an active-site residue. 2 residues coordinate Mg(2+): Asp-113 and Glu-116. Residue Glu-116 is part of the active site. The DRBM domain maps to Asp-156–Ala-226.

Belongs to the ribonuclease III family. In terms of assembly, homodimer. Mg(2+) is required as a cofactor.

It localises to the cytoplasm. It carries out the reaction Endonucleolytic cleavage to 5'-phosphomonoester.. Functionally, digests double-stranded RNA. Involved in the processing of primary rRNA transcript to yield the immediate precursors to the large and small rRNAs (23S and 16S). Processes some mRNAs, and tRNAs when they are encoded in the rRNA operon. Processes pre-crRNA and tracrRNA of type II CRISPR loci if present in the organism. The polypeptide is Ribonuclease 3 (Nitrosococcus oceani (strain ATCC 19707 / BCRC 17464 / JCM 30415 / NCIMB 11848 / C-107)).